A 158-amino-acid chain; its full sequence is UPF0225 protein Pput_1155 (158 aa).

It belongs to the UPF0225 family.

This Pseudomonas putida (strain ATCC 700007 / DSM 6899 / JCM 31910 / BCRC 17059 / LMG 24140 / F1) protein is UPF0225 protein Pput_1155.